The chain runs to 283 residues: 4-diphosphocytidyl-2-C-methyl-D-erythritol kinase (283 aa).

Lysine 8 is an active-site residue. 90 to 100 (PIGSGLAGGSS) contacts ATP. Residue aspartate 132 is part of the active site.

Belongs to the GHMP kinase family. IspE subfamily.

It carries out the reaction 4-CDP-2-C-methyl-D-erythritol + ATP = 4-CDP-2-C-methyl-D-erythritol 2-phosphate + ADP + H(+). It functions in the pathway isoprenoid biosynthesis; isopentenyl diphosphate biosynthesis via DXP pathway; isopentenyl diphosphate from 1-deoxy-D-xylulose 5-phosphate: step 3/6. In terms of biological role, catalyzes the phosphorylation of the position 2 hydroxy group of 4-diphosphocytidyl-2C-methyl-D-erythritol. This is 4-diphosphocytidyl-2-C-methyl-D-erythritol kinase from Chlamydia muridarum (strain MoPn / Nigg).